Consider the following 184-residue polypeptide: Oligoribonuclease (184 aa).

The Exonuclease domain occupies L7–L170. Residue Y128 is part of the active site.

This sequence belongs to the oligoribonuclease family.

The protein resides in the cytoplasm. 3'-to-5' exoribonuclease specific for small oligoribonucleotides. In Hydrogenovibrio crunogenus (strain DSM 25203 / XCL-2) (Thiomicrospira crunogena), this protein is Oligoribonuclease.